We begin with the raw amino-acid sequence, 1154 residues long: Chromosome partition protein Smc (1154 aa).

Residue 32–39 (PNGCGKSN) coordinates ATP. Coiled-coil stretches lie at residues 170–215 (VAGL…ARQA), 282–505 (LREA…LNGE), and 627–993 (AARR…EARE).

This sequence belongs to the SMC family. As to quaternary structure, homodimer.

Its subcellular location is the cytoplasm. Required for chromosome condensation and partitioning. This chain is Chromosome partition protein Smc, found in Rhodopseudomonas palustris (strain ATCC BAA-98 / CGA009).